The chain runs to 212 residues: Sclerostin (212 aa).

Residues 1-23 (MQLSLALCLVCLLVHAAFRVVEG) form the signal peptide. Asparagine 52 carries an N-linked (GlcNAc...) asparagine glycan. Disulfide bonds link cysteine 79–cysteine 133, cysteine 93–cysteine 147, cysteine 104–cysteine 164, and cysteine 108–cysteine 166. The region spanning 81-171 (ELHFTRYVTD…ASCKCKRLTR (91 aa)) is the CTCK domain. N-linked (GlcNAc...) asparagine glycosylation is present at asparagine 174. Positions 179–212 (KDFGPEAARPQTGRKLRPRARGTKASRAELENAY) are disordered. The span at 190–202 (TGRKLRPRARGTK) shows a compositional bias: basic residues.

It belongs to the sclerostin family. Interacts with LRP4 (via the extracellular domain); the interaction facilitates the inhibition of Wnt signaling. Interacts with LRP5 (via the first two YWTD-EGF repeat domains); the interaction inhibits Wnt-mediated signaling. Interacts with LRP6.

Its subcellular location is the secreted. It localises to the extracellular space. It is found in the extracellular matrix. Negative regulator of bone growth that acts through inhibition of Wnt signaling and bone formation. The polypeptide is Sclerostin (Bos taurus (Bovine)).